A 326-amino-acid polypeptide reads, in one-letter code: ATPase GET3 (326 aa).

Residue Lys-32–Thr-39 participates in ATP binding. Asp-61 is an active-site residue. The ATP site is built by Glu-244 and Asn-271. 2 residues coordinate Zn(2+): Cys-282 and Cys-285.

This sequence belongs to the arsA ATPase family. In terms of assembly, homodimer.

The protein localises to the cytoplasm. It is found in the endoplasmic reticulum. Functionally, ATPase required for the post-translational delivery of tail-anchored (TA) proteins to the endoplasmic reticulum. Recognizes and selectively binds the transmembrane domain of TA proteins in the cytosol. This complex then targets to the endoplasmic reticulum by membrane-bound receptors, where the tail-anchored protein is released for insertion. This process is regulated by ATP binding and hydrolysis. ATP binding drives the homodimer towards the closed dimer state, facilitating recognition of newly synthesized TA membrane proteins. ATP hydrolysis is required for insertion. Subsequently, the homodimer reverts towards the open dimer state, lowering its affinity for the membrane-bound receptor, and returning it to the cytosol to initiate a new round of targeting. This is ATPase GET3 from Phaeosphaeria nodorum (strain SN15 / ATCC MYA-4574 / FGSC 10173) (Glume blotch fungus).